A 681-amino-acid polypeptide reads, in one-letter code: T-box brain protein 1 (681 aa).

Disordered stretches follow at residues 43–83 and 108–127; these read TDNL…RSKL and SQSSQPQSAATAPSAMFPYP. Positions 58–68 are enriched in polar residues; the sequence is GMTNQSDTDNF. Low complexity predominate over residues 108-122; that stretch reads SQSSQPQSAATAPSA. Residues 213-393 constitute a DNA-binding region (T-box); sequence LWLKFHRHQT…HNPFAKGFRD (181 aa). The residue at position 408 (threonine 408) is a Phosphothreonine. Serine 410 is subject to Phosphoserine. The tract at residues 447–483 is disordered; that stretch reads PGAGAGPGPGTDRSVPHTNGLLSPQQAEDPGAPSPQR. The span at 462–472 shows a compositional bias: polar residues; it reads PHTNGLLSPQQ. Phosphoserine is present on serine 594. The disordered stretch occupies residues 597-655; that stretch reads APAAEDAKPKDLSDSSWIETPSSIKSIDSSDSGIYEQAKRRRISPADTPVSESSSPLKS. The span at 618 to 628 shows a compositional bias: low complexity; the sequence is SSIKSIDSSDS. At serine 640 the chain carries Phosphoserine.

As to quaternary structure, homodimer. Part of a complex containing CASK, TBR1 and TSPYL2; may modulate gene expression in response to neuronal synaptic activity. Forms homodimers. Interacts with FOXP2. Interacts with FOXP1. Interacts with BCL11A. In terms of tissue distribution, expressed in the developing and adult cortex. Expressed in the olfactory bulbs.

Its subcellular location is the nucleus. In terms of biological role, transcriptional repressor involved in multiple aspects of cortical development, including neuronal migration, laminar and areal identity, and axonal projection. As transcriptional repressor of FEZF2, it blocks the formation of the corticospinal (CS) tract from layer 6 projection neurons, thereby restricting the origin of CS axons specifically to layer 5 neurons. The chain is T-box brain protein 1 (Tbr1) from Mus musculus (Mouse).